Consider the following 389-residue polypeptide: Oxysterol-binding protein 1 (389 aa).

Coiled-coil stretches lie at residues 1-31 (MGKK…NKPA) and 340-371 (KDDV…DEWK). The disordered stretch occupies residues 1-43 (MGKKDKNVSVEEEVDEAEIEKLAAENANKPAPQLTKEDLDAMD).

This sequence belongs to the OSBP family. Interacts with dstC.

It localises to the cytoplasm. In terms of biological role, may play a role in the regulation of the slug-fruiting body switch. This Dictyostelium discoideum (Social amoeba) protein is Oxysterol-binding protein 1 (osbA).